A 256-amino-acid polypeptide reads, in one-letter code: tRNA-cytidine(32) 2-sulfurtransferase (256 aa).

The PP-loop motif motif lies at 35–40 (SGGKDS). Residues cysteine 110, cysteine 113, and cysteine 201 each contribute to the [4Fe-4S] cluster site.

It belongs to the TtcA family. In terms of assembly, homodimer. The cofactor is Mg(2+). [4Fe-4S] cluster is required as a cofactor.

It localises to the cytoplasm. It carries out the reaction cytidine(32) in tRNA + S-sulfanyl-L-cysteinyl-[cysteine desulfurase] + AH2 + ATP = 2-thiocytidine(32) in tRNA + L-cysteinyl-[cysteine desulfurase] + A + AMP + diphosphate + H(+). The protein operates within tRNA modification. Its function is as follows. Catalyzes the ATP-dependent 2-thiolation of cytidine in position 32 of tRNA, to form 2-thiocytidine (s(2)C32). The sulfur atoms are provided by the cysteine/cysteine desulfurase (IscS) system. The polypeptide is tRNA-cytidine(32) 2-sulfurtransferase (Coxiella burnetii (strain Dugway 5J108-111)).